We begin with the raw amino-acid sequence, 185 residues long: Cytidylate kinase (185 aa).

An ATP-binding site is contributed by 8–16 (GPPGSGKTT).

The protein belongs to the cytidylate kinase family. Type 2 subfamily.

Its subcellular location is the cytoplasm. The catalysed reaction is CMP + ATP = CDP + ADP. It carries out the reaction dCMP + ATP = dCDP + ADP. This chain is Cytidylate kinase, found in Desulfurococcus amylolyticus (strain DSM 18924 / JCM 16383 / VKM B-2413 / 1221n) (Desulfurococcus kamchatkensis).